A 160-amino-acid chain; its full sequence is Cytochrome b6-f complex subunit 4 (160 aa).

3 consecutive transmembrane segments (helical) span residues 36–56, 95–115, and 131–151; these read LLYIFPVVILGSIACCGGLAV, LLGVVLMAAVPAGLIAVPFIE, and AVFLFGTFVAIWLGIGATFPI.

This sequence belongs to the cytochrome b family. PetD subfamily. The 4 large subunits of the cytochrome b6-f complex are cytochrome b6, subunit IV (17 kDa polypeptide, petD), cytochrome f and the Rieske protein, while the 4 small subunits are petG, petL, petM and petN. The complex functions as a dimer.

The protein resides in the plastid. It localises to the cyanelle thylakoid membrane. Component of the cytochrome b6-f complex, which mediates electron transfer between photosystem II (PSII) and photosystem I (PSI), cyclic electron flow around PSI, and state transitions. The protein is Cytochrome b6-f complex subunit 4 of Cyanophora paradoxa.